The sequence spans 426 residues: Squamosa promoter-binding-like protein 10 (426 aa).

Residues 178-255 (PPRCQAEGCK…AEHNRRRRKP (78 aa)) form an SBP-type zinc finger. Zn(2+) contacts are provided by Cys-181, Cys-186, Cys-203, His-206, Cys-222, Cys-225, His-229, and Cys-241. Positions 238 to 254 (KRSCRKRLAEHNRRRRK) match the Bipartite nuclear localization signal motif. Composition is skewed to low complexity over residues 268-287 (DAAA…AATS) and 401-417 (SDQN…NNNN). Disordered regions lie at residues 268–290 (DAAA…SYTG) and 392–426 (PSTA…VDFM).

As to expression, expressed in stems, leaf sheaths, and young panicles.

It is found in the nucleus. Trans-acting factor that binds specifically to the consensus nucleotide sequence 5'-TNCGTACAA-3'. The polypeptide is Squamosa promoter-binding-like protein 10 (SPL10) (Oryza sativa subsp. indica (Rice)).